Here is a 312-residue protein sequence, read N- to C-terminus: R2-like ligand binding oxidase (312 aa).

3 residues coordinate Mn(2+): Glu-68, Glu-101, and His-104. The segment at residues 71-162 is a cross-link (3-(O4'-tyrosyl)-valine (Val-Tyr)); it reads VTQDIQPFMA…AAQVRASATY (92 aa). Residue Glu-101 coordinates Fe cation. Positions 167, 202, and 205 each coordinate Fe cation.

Belongs to the ribonucleoside diphosphate reductase small chain family. R2-like ligand binding oxidase subfamily. Homodimer. Fe cation serves as cofactor. The cofactor is Mn(2+).

Probable oxidase that might be involved in lipid metabolism. This chain is R2-like ligand binding oxidase, found in Mycobacterium sp. (strain JLS).